The primary structure comprises 855 residues: Inactive rhomboid protein 1 (855 aa).

The Cytoplasmic segment spans residues 1–411 (MSEARRDSTS…HRPFFTYWLT (411 aa)). Phosphoserine occurs at positions 76 and 176. Phosphothreonine is present on residues Thr180 and Thr183. Ser390 carries the phosphoserine modification. Residues 412–432 (FVHSLVTILAVCIYGIAPVGF) form a helical membrane-spanning segment. The Lumenal portion of the chain corresponds to 433-655 (SQHETVDSVL…NPEVPDQFYR (223 aa)). An N-linked (GlcNAc...) asparagine glycan is attached at Asn583. Residues 656–676 (LWLSLFLHAGILHCLVSICFQ) traverse the membrane as a helical segment. The Cytoplasmic portion of the chain corresponds to 677–691 (MTVLRDLEKLAGWHR). A helical membrane pass occupies residues 692–712 (IAIIYLLSGVTGNLASAIFLP). The Lumenal portion of the chain corresponds to 713–714 (YR). A helical transmembrane segment spans residues 715–735 (AEVGPAGSQFGILACLFVELF). The Cytoplasmic portion of the chain corresponds to 736 to 746 (QSWQILARPWR). A helical membrane pass occupies residues 747 to 767 (AFFKLLAVVLFLFTFGLLPWI). The Lumenal portion of the chain corresponds to 768–772 (DNFAH). The helical transmembrane segment at 773-793 (ISGFISGLFLSFAFLPYISFG) threads the bilayer. The Cytoplasmic segment spans residues 794–803 (KFDLYRKRCQ). The chain crosses the membrane as a helical span at residues 804 to 824 (IIIFQVVFLGLLAGLVVLFYV). Topologically, residues 825–855 (YPVRCEWCEFLTCIPFTDKFCEKYELDAQLH) are lumenal.

Belongs to the peptidase S54 family. As to quaternary structure, homodimer, or homooligomer. Interacts with TGFA and HBEGF. Interacts with EGF; may retain EGF in the endoplasmic reticulum and regulates its degradation through the endoplasmic reticulum-associated degradation (ERAD). Interacts (via cytoplasmic N-terminus) with FRMD8/iTAP; this interaction leads to mutual protein stabilization. Interacts with ADAM17/TACE. N-glycosylated. In terms of tissue distribution, highly expressed in cerebellum, cerebrum, heart, skeletal muscle, placenta, pancreatic islet and testis. Detected at lower levels in colon, kidney, small intestine and lung.

Its subcellular location is the endoplasmic reticulum membrane. It is found in the golgi apparatus membrane. Regulates ADAM17 protease, a sheddase of the epidermal growth factor (EGF) receptor ligands and TNF, thereby plays a role in sleep, cell survival, proliferation, migration and inflammation. Does not exhibit any protease activity on its own. This is Inactive rhomboid protein 1 (RHBDF1) from Homo sapiens (Human).